The chain runs to 264 residues: Thymidylate synthase (264 aa).

Arg21 provides a ligand contact to dUMP. His51 contacts (6R)-5,10-methylene-5,6,7,8-tetrahydrofolate. Position 126–127 (126–127) interacts with dUMP; sequence RR. Cys146 serves as the catalytic Nucleophile. DUMP-binding positions include 166–169, Asn177, and 207–209; these read RSAD and HIY. Asp169 contacts (6R)-5,10-methylene-5,6,7,8-tetrahydrofolate. Position 263 (Ser263) interacts with (6R)-5,10-methylene-5,6,7,8-tetrahydrofolate.

It belongs to the thymidylate synthase family. Bacterial-type ThyA subfamily. Homodimer.

It is found in the cytoplasm. It catalyses the reaction dUMP + (6R)-5,10-methylene-5,6,7,8-tetrahydrofolate = 7,8-dihydrofolate + dTMP. It participates in pyrimidine metabolism; dTTP biosynthesis. Its function is as follows. Catalyzes the reductive methylation of 2'-deoxyuridine-5'-monophosphate (dUMP) to 2'-deoxythymidine-5'-monophosphate (dTMP) while utilizing 5,10-methylenetetrahydrofolate (mTHF) as the methyl donor and reductant in the reaction, yielding dihydrofolate (DHF) as a by-product. This enzymatic reaction provides an intracellular de novo source of dTMP, an essential precursor for DNA biosynthesis. The chain is Thymidylate synthase from Phocaeicola vulgatus (strain ATCC 8482 / DSM 1447 / JCM 5826 / CCUG 4940 / NBRC 14291 / NCTC 11154) (Bacteroides vulgatus).